We begin with the raw amino-acid sequence, 438 residues long: Diaminopimelate decarboxylase (438 aa).

Residue Lys-73 is modified to N6-(pyridoxal phosphate)lysine. Pyridoxal 5'-phosphate-binding positions include Ser-217, Gly-254, and 294–297; that span reads EPGR. Substrate contacts are provided by Arg-297, Arg-333, and Tyr-337. Cys-362 serves as the catalytic Proton donor. 2 residues coordinate substrate: Glu-363 and Tyr-391. Residue Tyr-391 coordinates pyridoxal 5'-phosphate.

Belongs to the Orn/Lys/Arg decarboxylase class-II family. LysA subfamily. Homodimer. Pyridoxal 5'-phosphate serves as cofactor.

The enzyme catalyses meso-2,6-diaminopimelate + H(+) = L-lysine + CO2. It participates in amino-acid biosynthesis; L-lysine biosynthesis via DAP pathway; L-lysine from DL-2,6-diaminopimelate: step 1/1. Competitively inhibited by the substrate analog azelaic acid in vitro but not in vivo. In terms of biological role, specifically catalyzes the decarboxylation of meso-diaminopimelate (meso-DAP) to L-lysine. This chain is Diaminopimelate decarboxylase, found in Methanocaldococcus jannaschii (strain ATCC 43067 / DSM 2661 / JAL-1 / JCM 10045 / NBRC 100440) (Methanococcus jannaschii).